A 2045-amino-acid chain; its full sequence is MAQQQSSRLNRLLTLLDTGSTQATRLTAAKQIGDIAKSHPQDLSSLLRKVLHHLRSKKWDTRVAAAHAIGAIVLNVKHPSLSELLNSLATKLGEAGISDNVDEVVAFRNLQSKILANAPFRSFEMNKVLEFGALLASGGQEYDILNDNSKNPRDRVARQKKNLRRRLGLDMCEQFMDVNEMIRDEDLIEQKSNVPANGVGNRLYANCSPHHIQQFVSRMVPRVNSRRPSARELNLLKRKAKISSKDQAKGSCEVADVEMSSSHVASTSKRILSDSLDSSKADIGNEDDIEPDGDGKWPFHSFVEQLILDMFDPAWEIRHGSVMALREILMLHGGSAGVSTEEFSSDNGFELKDVLNKVTREREIDLNMQVSENELEPLRKRPKIEDPSKSFIDNTVLEVIGGDYDINVKDEDAEFLLPPVKVNGQTDCSSTKLEPQSSMDDSTSHSEINHVAEVNNHFEDKSFIEEPVIPKQQEENLEVLDLVKQARHSWIKNFEFLQDCTIRFLCVLSLDRFGDYISDQVVAPVREACAQALGATFKYMNPSLIYETLNILLQMQRRPEWEIRHGSLLGIKYLVAVRQEMLQDLLGYILPACKAGLEDSDDDVRAVAADALIPAAAAIVSLRGQTLLSIVMLLWDILLELDDLSPSTSSIMNLLAEIYSQDDMTLVMHEELSLGEEQNIELNEMGHIESIGERRDVKESPYALSGLAPRLWPFTRHDITSVRFSAIRTLERLLEAGCRKNISGQSKSSFWPSSILGDTLRIVFQNLLLESTEEILECSERVWRLLVQCPVDDLEDTAKFYMASWIELAATPYGSTLDATKMFWPVAPPRKSHFKAAAKMKAVKLENEASSILGFDYARSSASLEKQEDASARSTKIIVGSDMEMSVTRTRVVTASALGIFASRLREGSMQFVVDPLSSTLTSMSGVQRQVGSIVLISWFRETKCKAPSDGSGSLPGFPSPLKKWLLDLLACADPAFPTKDIFLPYAELSRTYTKMRNEASQLLHTVETCHCFDKLLSTNKLNVESVTADETIDFASTLDLWNKESAGNESLEKQVFEDVESSRQQLLSTAGYLKCVQSNLHITVTSLVAAAVVWMSEFPARLNPIILPLMASIKREQEQILQQIAAEALAELIAYCVDRKPSPNDKLIKNICSLTCMDPSETPQASIISSMDIVDDMDFLSSRSNTGKQKAKVVLASGEDRSKVEGFITRRGSELALKHLSLKFGGSLFDKLPKLWECLTEVLVPEIPSDQQKIDLKIESISDPQVLINNIQVVRSIAPVMEETLKPRLLSLLPCIFKCVRHSHVAVRLAASRCVMTMAKSMTTDVMAAVVESAIPMLGDLTCISGRQGAGMLIGLLVQGLGVELVPYSPLLVVPLLRCMSDVDSSVRQSVTRSFAALVPMLPLARGVPPPVGLSKDLSSNAEDAKFLEQLLDNSHIDDYKLCTELKVQLRRYQQEGINWLGFLKRFKLHGILCDDMGLGKTLQASAIVASDAAERRGSTDELDVFPSIIVCPSTLVGHWAFEIEKYIDLSLLSVLQYVGSAQDRVSLREQFNNHNVIITSYDVVRKDVDYLTQFSWNYCILDEGHIIKNAKSKITAAVKQLKAQHRLILSGTPIQNNIMELWSLFDFLMPGFLGTERQFQASYGKPLLAARDPKCSAKDAEAGVLAMEALHKQVMPFLLRRTKEEVLSDLPEKIIQDRYCDLSPVQLKLYEQFSGSSAKQEISSIIKVDGSADSGNADVAPTKASTHVFQALQYLLKLCSHPLLVLGDKVTEPVASDLAAMINGCSDIITELHKVQHSPKLVALQEILEECGIGSDASSSDGTLSVGQHRVLIFAQHKALLDIIEKDLFQAHMKSVTYMRLDGSVVPEKRFEIVKAFNSDPTIDVLLLTTHVGGLGLNLTSADTLVFMEHDWNPMRDHQAMDRAHRLGQKRVVNVHRLIMRGTLEEKVMSLQKFKVSVANTVINAENASMKTMNTDQLLDLFASAETSKKGGGSSKKGSEDNDQIAGTGKGMKAILGNLEELWDQSQYTEEYNLSQFLTKLNG.

HEAT repeat units lie at residues 3–40 (QQQS…KSHP), 41–78 (QDLS…NVKH), 584–621 (DLLG…AIVS), 702–739 (YALS…AGCR), 1288–1325 (PRLL…SMTT), and 1367–1405 (VPYS…MLPL). One can recognise a Helicase ATP-binding domain in the interval 1463–1633 (GFLKRFKLHG…WSLFDFLMPG (171 aa)). An ATP-binding site is contributed by 1476–1483 (DDMGLGKT). Positions 1584-1587 (DEGH) match the DEAH box motif. In terms of domain architecture, Helicase C-terminal spans 1805–1976 (ALQEILEECG…AENASMKTMN (172 aa)). The segment at 1990–2011 (SKKGGGSSKKGSEDNDQIAGTG) is disordered.

It belongs to the helicase family.

The protein localises to the nucleus. In terms of biological role, involved in meristem development. Acts as a positive regulator of the CUC-STM pathway in shoot apical meristem (SAM) neo-formation. This is TATA-binding protein-associated factor BTAF1 (BTAF1) from Arabidopsis thaliana (Mouse-ear cress).